A 315-amino-acid chain; its full sequence is Serine/threonine-protein phosphatase PP2A catalytic subunit 2 (315 aa).

4 residues coordinate Mn(2+): D62, H64, D90, and N122. H123 (proton donor) is an active-site residue. Mn(2+) contacts are provided by H172 and H247. Positions 294–315 are disordered; it reads QFEPAPRENEPHTTRRVPDYFL. Over residues 298 to 315 the composition is skewed to basic and acidic residues; that stretch reads APRENEPHTTRRVPDYFL. A Leucine methyl ester modification is found at L315.

Belongs to the PPP phosphatase family. PP-2A subfamily. The cofactor is Mn(2+). Post-translationally, reversibly methyl esterified on Leu-315 by leucine carboxyl methyltransferase 1 (PPM1) and protein phosphatase methylesterase 1 (PPE1). Carboxyl methylation influences the affinity of the catalytic subunit for the different regulatory subunits, thereby modulating the PP2A holoenzyme's substrate specificity, enzyme activity and cellular localization.

The enzyme catalyses O-phospho-L-seryl-[protein] + H2O = L-seryl-[protein] + phosphate. The catalysed reaction is O-phospho-L-threonyl-[protein] + H2O = L-threonyl-[protein] + phosphate. The protein is Serine/threonine-protein phosphatase PP2A catalytic subunit 2 (Ppn2) of Paramecium tetraurelia.